The following is a 179-amino-acid chain: Large ribosomal subunit protein uL5 (179 aa).

Belongs to the universal ribosomal protein uL5 family. In terms of assembly, part of the 50S ribosomal subunit; part of the 5S rRNA/L5/L18/L25 subcomplex. Contacts the 5S rRNA and the P site tRNA. Forms a bridge to the 30S subunit in the 70S ribosome.

Its function is as follows. This is one of the proteins that bind and probably mediate the attachment of the 5S RNA into the large ribosomal subunit, where it forms part of the central protuberance. In the 70S ribosome it contacts protein S13 of the 30S subunit (bridge B1b), connecting the 2 subunits; this bridge is implicated in subunit movement. Contacts the P site tRNA; the 5S rRNA and some of its associated proteins might help stabilize positioning of ribosome-bound tRNAs. This chain is Large ribosomal subunit protein uL5, found in Vesicomyosocius okutanii subsp. Calyptogena okutanii (strain HA).